The chain runs to 505 residues: Probable malate:quinone oxidoreductase (505 aa).

It belongs to the MQO family. FAD is required as a cofactor.

The catalysed reaction is (S)-malate + a quinone = a quinol + oxaloacetate. It functions in the pathway carbohydrate metabolism; tricarboxylic acid cycle; oxaloacetate from (S)-malate (quinone route): step 1/1. The protein is Probable malate:quinone oxidoreductase of Pseudomonas fluorescens.